The sequence spans 312 residues: 2-aminophenol 1,6-dioxygenase subunit beta (312 aa).

The Fe cation site is built by histidine 13, histidine 62, and glutamate 251.

Belongs to the LigB/MhpB extradiol dioxygenase family. In terms of assembly, the APD complex is a heterotetramer of 2 alpha (CnbCa) and 2 beta (CnbCb) subunits. The cofactor is Fe(2+).

It carries out the reaction 2-aminophenol + O2 = 2-aminomuconate 6-semialdehyde. The enzyme catalyses 2-amino-5-chlorophenol + O2 = 2-amino-5-chloromuconate 6-semialdehyde. The protein operates within xenobiotic degradation; nitrobenzene degradation. Its pathway is xenobiotic degradation; 4-chloronitrobenzene degradation. Its activity is regulated as follows. Complete loss of activity in the presence of Ni(2+), Co(2+), Cd(2+), Zn(2+) and hydrogen peroxide, however activity with hydrogen peroxide partially restored upon addition of excess ascorbate. Partially inhibited by Fe(2+), Mg(2+), Ca(2+), Mn(2+), Cu(2+) and also by EDTA, at 2 mM concentration. Total activity inhibited in the presence of catechol or 4-nitrocatechol but completely restored after removal of catechol and addition of 2 mM Fe(2+) and 5 mM ascorbate. In terms of biological role, component of the 2-aminophenol 1,6-dioxygenase (APD) complex that catalyzes the ring fission of 2-aminophenol to produce 2-aminomuconic semialdehyde. CnbCb seems to be the catalytic subunit of the complex. Also active on other substrates such as 2-amino-5-chlorophenol (68% activity), protocatechuate (33% activity) and catechol (5% activity). Both 2-aminophenol and 2-amino-5-cholorophenol are likely native substrates for this dioxygenase which is involved in the reductive degradation pathway of both nitrobenzene (NB) and 4-chloronitrobenzene (4-CNB), allowing C.testosteroni strain CNB-1 to grow on these compounds as sole source of carbon, nitrogen, and energy. The chain is 2-aminophenol 1,6-dioxygenase subunit beta from Comamonas testosteroni (Pseudomonas testosteroni).